Reading from the N-terminus, the 331-residue chain is HTH-type transcriptional regulator RipA (331 aa).

The HTH araC/xylS-type domain occupies 112–209 (RAVAQVLVSN…GATPSTFTTG (98 aa)). DNA-binding regions (H-T-H motif) lie at residues 129–150 (EEFA…LKST) and 176–199 (ISVV…RRHT).

Its function is as follows. Under iron limitation, RipA negatively controls the expression of the acn (aconitase), catA (catechol 1,2 dioxygenase), leuCD (isopropylmalate dehydratase), narKGHJI (nitrite/nitrate transporter and nitrate reductase), sdhCAB (succinate dehydrogenase), pta (phosphotransacetylase) and katA (catalase) genes. Binds to the consensus sequence in the promoter region. In Corynebacterium glutamicum (strain ATCC 13032 / DSM 20300 / JCM 1318 / BCRC 11384 / CCUG 27702 / LMG 3730 / NBRC 12168 / NCIMB 10025 / NRRL B-2784 / 534), this protein is HTH-type transcriptional regulator RipA.